The chain runs to 360 residues: Peptide chain release factor 1 (360 aa).

N5-methylglutamine is present on Gln236. Positions Gln288–Ile308 are disordered. Residues Ala293–Ile308 are compositionally biased toward basic and acidic residues.

This sequence belongs to the prokaryotic/mitochondrial release factor family. Methylated by PrmC. Methylation increases the termination efficiency of RF1.

The protein resides in the cytoplasm. In terms of biological role, peptide chain release factor 1 directs the termination of translation in response to the peptide chain termination codons UAG and UAA. The sequence is that of Peptide chain release factor 1 from Streptococcus equi subsp. zooepidemicus (strain H70).